We begin with the raw amino-acid sequence, 182 residues long: Plasmolipin (182 aa).

Residues M1–G20 form a disordered region. Residues M1–S35 lie on the Cytoplasmic side of the membrane. The segment covering K7–A16 has biased composition (polar residues). Residue S9 is modified to Phosphoserine. The MARVEL domain maps to F32–R166. Residues A36–A56 form a helical membrane-spanning segment. Residues D57–W68 are Extracellular-facing. A helical transmembrane segment spans residues V69–F89. At Q90–P99 the chain is on the cytoplasmic side. A helical transmembrane segment spans residues W100–V120. Residues A121–S141 are Extracellular-facing. The helical transmembrane segment at A142 to F162 threads the bilayer. The Cytoplasmic portion of the chain corresponds to Q163–S182.

It belongs to the MAL family. In terms of assembly, forms oligomers. In terms of processing, phosphorylated. As to expression, detected to the sciatic nerve, brain and kidney. In the sciatic nerve, found in Schwann cells; in the brain, in developing oligodendrocytes, especially of the corpus callosum, of cortical white matter, in the optic nerve and in the stratum radiatum and stratum oriens of the hippocampus. In kidney, segregated to the apical surface of renal tubular epithelia.

Its subcellular location is the cell membrane. The protein resides in the myelin membrane. It localises to the apical cell membrane. Main component of the myelin sheath that plays an important role in myelin membrane biogenesis and myelination. Plays an essential function in apical endocytosis. Regulates epithelial development through the regulation of apical endocytosis. Part of the intracellular machinery that mediates basolateral-to-apical transport of ICAM-1, an essential adhesion receptor in epithelial cells, from the subapical compartment in hepatic epithelial cells. This Rattus norvegicus (Rat) protein is Plasmolipin (Pllp).